Here is a 303-residue protein sequence, read N- to C-terminus: tRNA pseudouridine synthase B (303 aa).

Asp-47 serves as the catalytic Nucleophile.

It belongs to the pseudouridine synthase TruB family. Type 1 subfamily.

It carries out the reaction uridine(55) in tRNA = pseudouridine(55) in tRNA. Its function is as follows. Responsible for synthesis of pseudouridine from uracil-55 in the psi GC loop of transfer RNAs. The chain is tRNA pseudouridine synthase B from Legionella pneumophila (strain Paris).